Reading from the N-terminus, the 1157-residue chain is ATP-dependent helicase/deoxyribonuclease subunit B (1157 aa).

The UvrD-like helicase ATP-binding domain maps to 1 to 277 (MTLQIIAGKA…KILLENKRAN (277 aa)). 8 to 15 (GKAGTGKT) is a binding site for ATP. The UvrD-like helicase C-terminal domain occupies 271–590 (LENKRANSDS…VLADMENAKL (320 aa)). Residues Cys-794, Cys-1115, Cys-1118, and Cys-1124 each contribute to the [4Fe-4S] cluster site.

This sequence belongs to the helicase family. AddB/RexB type 1 subfamily. As to quaternary structure, heterodimer of AddA and AddB. Mg(2+) serves as cofactor. Requires [4Fe-4S] cluster as cofactor.

Its function is as follows. The heterodimer acts as both an ATP-dependent DNA helicase and an ATP-dependent, dual-direction single-stranded exonuclease. Recognizes the chi site generating a DNA molecule suitable for the initiation of homologous recombination. The AddB subunit has 5' -&gt; 3' nuclease activity but not helicase activity. This Listeria innocua serovar 6a (strain ATCC BAA-680 / CLIP 11262) protein is ATP-dependent helicase/deoxyribonuclease subunit B.